A 291-amino-acid polypeptide reads, in one-letter code: MLPLLAALLAAACPLPPARGGAVDAPGLLGAPLNASVNASSSDEPAAPRLLASAAPGAPERPEEEAAAPCNISVQRQMLSSLLVRWGRPRGFQCDLLLFSTNAHGRAFFAAAFHRVGPPLLIEHLGLAAGGAQQDLRLCVGCGWVRGRRPGRLRPTGATAGAPTALPAYPAAEPPGPLWLQGEPLHFCCLDFSLEELQGEPGWRLNRKPIESTLVACFMTLVIVVWSVAALIWPVPIIAGFLPNGMEQRRTTASAAAAAPAAVPAGTTAAAAAAAAAAAAAAAVTSGTATK.

The N-terminal stretch at 1 to 20 (MLPLLAALLAAACPLPPARG) is a signal peptide. N-linked (GlcNAc...) asparagine glycosylation is present at N71. Helical transmembrane passes span 221–241 (LVIV…IAGF) and 261–281 (AAVP…AAAA).

It belongs to the TMEM158 family. N-glycosylated.

The protein resides in the membrane. Its function is as follows. Receptor for brain injury-derived neurotrophic peptide (BINP), a synthetic 13-mer peptide. The protein is Transmembrane protein 158 (TMEM158) of Bos taurus (Bovine).